Here is a 375-residue protein sequence, read N- to C-terminus: Glycogen synthase kinase-3 homolog YGK3 (375 aa).

The region spanning 41–329 is the Protein kinase domain; the sequence is VREGKRIGHG…ARQLMAHEFF (289 aa). ATP-binding positions include 47 to 55 and Lys-74; that span reads IGHGSFGTV. Asp-173 acts as the Proton acceptor in catalysis. Ser-211 carries the phosphoserine modification.

The protein belongs to the protein kinase superfamily. Ser/Thr protein kinase family.

The catalysed reaction is L-seryl-[protein] + ATP = O-phospho-L-seryl-[protein] + ADP + H(+). It catalyses the reaction L-threonyl-[protein] + ATP = O-phospho-L-threonyl-[protein] + ADP + H(+). In terms of biological role, required for heat stress-instigated phosphorylation of BCY1 which is involved in cell wall integrity signaling. Regulates activity of MSN2, a transcription factor that binds to the stress-response element (STRE). Probably promotes formation of a complex between MSN2 and DNA. Regulates the stability of ROG1. The protein is Glycogen synthase kinase-3 homolog YGK3 (YGK3) of Saccharomyces cerevisiae (strain ATCC 204508 / S288c) (Baker's yeast).